The chain runs to 279 residues: uncharacterized protein (279 aa).

The N-terminal stretch at 1-21 (MKIIRTLFLLLIAVYGSSVVA) is a signal peptide.

It to E.coli YfcO.

This is an uncharacterized protein from Salmonella typhimurium (strain LT2 / SGSC1412 / ATCC 700720).